The chain runs to 365 residues: Cobalt-precorrin-5B C(1)-methyltransferase (365 aa).

The protein belongs to the CbiD family.

It catalyses the reaction Co-precorrin-5B + S-adenosyl-L-methionine = Co-precorrin-6A + S-adenosyl-L-homocysteine. It participates in cofactor biosynthesis; adenosylcobalamin biosynthesis; cob(II)yrinate a,c-diamide from sirohydrochlorin (anaerobic route): step 6/10. Its function is as follows. Catalyzes the methylation of C-1 in cobalt-precorrin-5B to form cobalt-precorrin-6A. This Clostridium perfringens (strain SM101 / Type A) protein is Cobalt-precorrin-5B C(1)-methyltransferase.